The sequence spans 472 residues: tRNA-2-methylthio-N(6)-dimethylallyladenosine synthase (472 aa).

The MTTase N-terminal domain maps to 22 to 142; it reads RKVFVKTYGC…LPDALKRARA (121 aa). [4Fe-4S] cluster-binding residues include C31, C67, C105, C183, C187, and C190. The Radical SAM core domain maps to 169-403; the sequence is RARGVTAFLT…LLVKQQRGFA (235 aa). The region spanning 404–466 is the TRAM domain; sequence EACVGREIDL…PNSLFAEMIG (63 aa).

It belongs to the methylthiotransferase family. MiaB subfamily. As to quaternary structure, monomer. [4Fe-4S] cluster serves as cofactor.

Its subcellular location is the cytoplasm. It catalyses the reaction N(6)-dimethylallyladenosine(37) in tRNA + (sulfur carrier)-SH + AH2 + 2 S-adenosyl-L-methionine = 2-methylsulfanyl-N(6)-dimethylallyladenosine(37) in tRNA + (sulfur carrier)-H + 5'-deoxyadenosine + L-methionine + A + S-adenosyl-L-homocysteine + 2 H(+). Functionally, catalyzes the methylthiolation of N6-(dimethylallyl)adenosine (i(6)A), leading to the formation of 2-methylthio-N6-(dimethylallyl)adenosine (ms(2)i(6)A) at position 37 in tRNAs that read codons beginning with uridine. In Rhizobium meliloti (strain 1021) (Ensifer meliloti), this protein is tRNA-2-methylthio-N(6)-dimethylallyladenosine synthase.